The chain runs to 333 residues: NADH-quinone oxidoreductase subunit H (333 aa).

A run of 8 helical transmembrane segments spans residues 15–35 (FFIF…FVTY), 88–108 (FILA…VIPF), 117–137 (IGVG…GVLT), 159–179 (ISYE…TGSL), 191–211 (VWYI…AVAE), 241–261 (FFML…TVLF), 273–293 (FIPG…LFIW), and 313–333 (VLLP…ELFF).

It belongs to the complex I subunit 1 family. NDH-1 is composed of 14 different subunits. Subunits NuoA, H, J, K, L, M, N constitute the membrane sector of the complex.

The protein resides in the cell membrane. It carries out the reaction a quinone + NADH + 5 H(+)(in) = a quinol + NAD(+) + 4 H(+)(out). Its function is as follows. NDH-1 shuttles electrons from NADH, via FMN and iron-sulfur (Fe-S) centers, to quinones in the respiratory chain. The immediate electron acceptor for the enzyme in this species is believed to be ubiquinone. Couples the redox reaction to proton translocation (for every two electrons transferred, four hydrogen ions are translocated across the cytoplasmic membrane), and thus conserves the redox energy in a proton gradient. This subunit may bind ubiquinone. The polypeptide is NADH-quinone oxidoreductase subunit H (Bacillus cytotoxicus (strain DSM 22905 / CIP 110041 / 391-98 / NVH 391-98)).